Consider the following 405-residue polypeptide: Phosphopentomutase (405 aa).

Mn(2+) is bound by residues aspartate 10, aspartate 303, histidine 308, aspartate 344, histidine 345, and histidine 356.

The protein belongs to the phosphopentomutase family. The cofactor is Mn(2+).

It localises to the cytoplasm. The enzyme catalyses 2-deoxy-alpha-D-ribose 1-phosphate = 2-deoxy-D-ribose 5-phosphate. The catalysed reaction is alpha-D-ribose 1-phosphate = D-ribose 5-phosphate. It functions in the pathway carbohydrate degradation; 2-deoxy-D-ribose 1-phosphate degradation; D-glyceraldehyde 3-phosphate and acetaldehyde from 2-deoxy-alpha-D-ribose 1-phosphate: step 1/2. Isomerase that catalyzes the conversion of deoxy-ribose 1-phosphate (dRib-1-P) and ribose 1-phosphate (Rib-1-P) to deoxy-ribose 5-phosphate (dRib-5-P) and ribose 5-phosphate (Rib-5-P), respectively. The polypeptide is Phosphopentomutase (Shewanella denitrificans (strain OS217 / ATCC BAA-1090 / DSM 15013)).